The following is a 437-amino-acid chain: UDP-N-acetylmuramate--L-alanine ligase (437 aa).

108–114 contacts ATP; sequence GAHGKTS.

Belongs to the MurCDEF family.

Its subcellular location is the cytoplasm. It catalyses the reaction UDP-N-acetyl-alpha-D-muramate + L-alanine + ATP = UDP-N-acetyl-alpha-D-muramoyl-L-alanine + ADP + phosphate + H(+). Its pathway is cell wall biogenesis; peptidoglycan biosynthesis. Cell wall formation. The chain is UDP-N-acetylmuramate--L-alanine ligase from Staphylococcus saprophyticus subsp. saprophyticus (strain ATCC 15305 / DSM 20229 / NCIMB 8711 / NCTC 7292 / S-41).